We begin with the raw amino-acid sequence, 90 residues long: Small ribosomal subunit protein bS18 (90 aa).

The protein belongs to the bacterial ribosomal protein bS18 family. As to quaternary structure, part of the 30S ribosomal subunit. Forms a tight heterodimer with protein bS6.

Its function is as follows. Binds as a heterodimer with protein bS6 to the central domain of the 16S rRNA, where it helps stabilize the platform of the 30S subunit. This chain is Small ribosomal subunit protein bS18, found in Bacteroides fragilis (strain YCH46).